The following is a 164-amino-acid chain: Large ribosomal subunit protein uL10 (164 aa).

It belongs to the universal ribosomal protein uL10 family. Part of the ribosomal stalk of the 50S ribosomal subunit. The N-terminus interacts with L11 and the large rRNA to form the base of the stalk. The C-terminus forms an elongated spine to which L12 dimers bind in a sequential fashion forming a multimeric L10(L12)X complex.

Forms part of the ribosomal stalk, playing a central role in the interaction of the ribosome with GTP-bound translation factors. The chain is Large ribosomal subunit protein uL10 from Helicobacter pylori (strain P12).